The sequence spans 410 residues: Protein king tubby 1 (410 aa).

Disordered stretches follow at residues 44 to 109 (QFMM…STRH) and 121 to 159 (ISPA…EGDV). The span at 47–72 (MSPNNPDQILTSTGNASVTTTPTSPY) shows a compositional bias: polar residues. Over residues 132 to 143 (SHHDSSSGKSVE) the composition is skewed to basic and acidic residues.

This sequence belongs to the TUB family.

The protein resides in the cytoplasm. It localises to the nucleus. The polypeptide is Protein king tubby 1 (king-tubby1) (Aedes aegypti (Yellowfever mosquito)).